The chain runs to 439 residues: Glutamine synthetase (439 aa).

Residues 12–93 enclose the GS beta-grasp domain; it reads SKIKFVQLVF…VYGFIYKDNK (82 aa). The GS catalytic domain maps to 99 to 439; the sequence is PRGILKRALE…EWELERYFFL (341 aa). Mg(2+) contacts are provided by E122 and E124. An ATP-binding site is contributed by E172. Mg(2+) contacts are provided by E177 and E184. An L-glutamate-binding site is contributed by G229. H233 contacts Mg(2+). Residues 235 to 237 and S237 each bind ATP; that span reads HIS. L-glutamate contacts are provided by R283, E289, and R301. Residues R301, R306, and K313 each coordinate ATP. E318 contacts Mg(2+). R320 lines the L-glutamate pocket.

Belongs to the glutamine synthetase family. Oligomer of 12 subunits arranged in the form of two hexagons. It depends on Mg(2+) as a cofactor.

It localises to the cytoplasm. The enzyme catalyses L-glutamate + NH4(+) + ATP = L-glutamine + ADP + phosphate + H(+). In terms of biological role, probably involved in nitrogen metabolism via ammonium assimilation. Catalyzes the ATP-dependent biosynthesis of glutamine from glutamate and ammonia. The polypeptide is Glutamine synthetase (Pyrococcus furiosus (strain ATCC 43587 / DSM 3638 / JCM 8422 / Vc1)).